The chain runs to 366 residues: 3-dehydroquinate synthase (366 aa).

Residues 74–79 (SGEAAK), 108–112 (GVVGD), 132–133 (TT), lysine 144, lysine 153, and 171–174 (FLRT) each bind NAD(+). Zn(2+) is bound by residues glutamate 186, histidine 249, and histidine 266.

It belongs to the sugar phosphate cyclases superfamily. Dehydroquinate synthase family. The cofactor is Co(2+). Zn(2+) is required as a cofactor. NAD(+) serves as cofactor.

It is found in the cytoplasm. The enzyme catalyses 7-phospho-2-dehydro-3-deoxy-D-arabino-heptonate = 3-dehydroquinate + phosphate. It participates in metabolic intermediate biosynthesis; chorismate biosynthesis; chorismate from D-erythrose 4-phosphate and phosphoenolpyruvate: step 2/7. Functionally, catalyzes the conversion of 3-deoxy-D-arabino-heptulosonate 7-phosphate (DAHP) to dehydroquinate (DHQ). The protein is 3-dehydroquinate synthase of Geobacillus kaustophilus (strain HTA426).